A 553-amino-acid chain; its full sequence is Arginine--tRNA ligase (553 aa).

The short motif at 130–140 (ANPTGDLHIGH) is the 'HIGH' region element.

The protein belongs to the class-I aminoacyl-tRNA synthetase family. As to quaternary structure, monomer.

The protein resides in the cytoplasm. The enzyme catalyses tRNA(Arg) + L-arginine + ATP = L-arginyl-tRNA(Arg) + AMP + diphosphate. This Staphylococcus aureus (strain MSSA476) protein is Arginine--tRNA ligase.